Consider the following 353-residue polypeptide: Guanine nucleotide-binding protein subunit alpha (353 aa).

The interval 1–26 is disordered; that stretch reads MGCGMSTEEKEGKARNEEIENQLKRD. Gly-2 is lipidated: N-myristoyl glycine. A lipid anchor (S-palmitoyl cysteine) is attached at Cys-3. The span at 7-26 shows a compositional bias: basic and acidic residues; sequence TEEKEGKARNEEIENQLKRD. A G-alpha domain is found at 32–353; that stretch reads NEIKMLLLGA…QENLRLCGLI (322 aa). The tract at residues 35-48 is G1 motif; that stretch reads KMLLLGAGESGKST. 14 residues coordinate GTP: Glu-43, Ser-44, Gly-45, Lys-46, Ser-47, Thr-48, Asp-150, Leu-175, Thr-181, Gly-203, Asn-269, Lys-270, Asp-272, and Ala-325. Ser-47 is a binding site for Mg(2+). Positions 173 to 181 are G2 motif; sequence DVLRSRVKT. Thr-181 serves as a coordination point for Mg(2+). A G3 motif region spans residues 196–205; that stretch reads YRMFDVGGQR. The interval 265–272 is G4 motif; that stretch reads ILFLNKID. The G5 motif stretch occupies residues 323 to 328; the sequence is TCATDT.

This sequence belongs to the G-alpha family. G(q) subfamily. In terms of assembly, g proteins are composed of 3 units; alpha, beta and gamma. The alpha chain contains the guanine nucleotide binding site. The cofactor is Mg(2+).

Guanine nucleotide-binding proteins (G proteins) are involved as modulators or transducers in various transmembrane signaling systems. The polypeptide is Guanine nucleotide-binding protein subunit alpha (Cryphonectria parasitica (Chestnut blight fungus)).